The sequence spans 88 residues: Prolevitide (88 aa).

The first 20 residues, 1–20, serve as a signal peptide directing secretion; sequence MYKGIFLCVLFAVICANSLA. The residue at position 74 (Q74) is a Pyrrolidone carboxylic acid. Position 87 is a glutamine amide (Q87).

It belongs to the gastrin/cholecystokinin family. As to expression, expressed by the skin glands.

The protein resides in the secreted. This chain is Prolevitide, found in Xenopus laevis (African clawed frog).